We begin with the raw amino-acid sequence, 171 residues long: Endoribonuclease YbeY (171 aa).

Zn(2+)-binding residues include H126, H130, and H136.

This sequence belongs to the endoribonuclease YbeY family. Zn(2+) is required as a cofactor.

Its subcellular location is the cytoplasm. Its function is as follows. Single strand-specific metallo-endoribonuclease involved in late-stage 70S ribosome quality control and in maturation of the 3' terminus of the 16S rRNA. The polypeptide is Endoribonuclease YbeY (Rhizobium johnstonii (strain DSM 114642 / LMG 32736 / 3841) (Rhizobium leguminosarum bv. viciae)).